The following is a 126-amino-acid chain: Phosphoribosyl-ATP pyrophosphatase (126 aa).

This sequence belongs to the PRA-PH family.

Its subcellular location is the cytoplasm. It carries out the reaction 1-(5-phospho-beta-D-ribosyl)-ATP + H2O = 1-(5-phospho-beta-D-ribosyl)-5'-AMP + diphosphate + H(+). It functions in the pathway amino-acid biosynthesis; L-histidine biosynthesis; L-histidine from 5-phospho-alpha-D-ribose 1-diphosphate: step 2/9. This chain is Phosphoribosyl-ATP pyrophosphatase, found in Variovorax paradoxus (strain S110).